Consider the following 509-residue polypeptide: Maturase K (509 aa).

Belongs to the intron maturase 2 family. MatK subfamily.

The protein resides in the plastid. It is found in the chloroplast. In terms of biological role, usually encoded in the trnK tRNA gene intron. Probably assists in splicing its own and other chloroplast group II introns. In Solanum lycopersicum (Tomato), this protein is Maturase K.